A 167-amino-acid chain; its full sequence is uncharacterized protein (167 aa).

Residues 115 to 167 (SYRSQPQLGFKSTPPAHSSVFHHSVKAPKEDQAQEAASRPLTSQDGWNPNIKK) are disordered.

This is an uncharacterized protein from Homo sapiens (Human).